A 280-amino-acid polypeptide reads, in one-letter code: Pantothenate synthetase (280 aa).

30–37 (MGALHRGH) provides a ligand contact to ATP. H37 serves as the catalytic Proton donor. Q61 is a (R)-pantoate binding site. Q61 contributes to the beta-alanine binding site. 148–151 (GEKD) lines the ATP pocket. (R)-pantoate is bound at residue Q154. ATP contacts are provided by residues V177 and 185–188 (LSSR).

This sequence belongs to the pantothenate synthetase family. Homodimer.

It localises to the cytoplasm. The enzyme catalyses (R)-pantoate + beta-alanine + ATP = (R)-pantothenate + AMP + diphosphate + H(+). Its pathway is cofactor biosynthesis; (R)-pantothenate biosynthesis; (R)-pantothenate from (R)-pantoate and beta-alanine: step 1/1. Its function is as follows. Catalyzes the condensation of pantoate with beta-alanine in an ATP-dependent reaction via a pantoyl-adenylate intermediate. The sequence is that of Pantothenate synthetase from Azobacteroides pseudotrichonymphae genomovar. CFP2.